A 328-amino-acid chain; its full sequence is Putative UDP-N-acetylglucosamine--dolichyl-phosphate N-acetylglucosaminephosphotransferase (328 aa).

Transmembrane regions (helical) follow at residues 1-21 (MLVS…VTLI), 48-68 (VPVL…FTFL), 78-98 (IENV…LGLL), 107-127 (ATRA…SVGH), 129-149 (IISI…IIIL), 166-186 (LNGL…YIGL), 192-212 (SFYA…FLIF), 228-248 (FIGS…ALFF), and 301-321 (YHIV…AVVF).

The protein belongs to the glycosyltransferase 4 family.

The protein resides in the cell membrane. The enzyme catalyses a di-trans,poly-cis-dolichyl phosphate + UDP-N-acetyl-alpha-D-glucosamine = an N-acetyl-alpha-D-glucosaminyl-diphospho-di-trans,poly-cis-dolichol + UMP. Its activity is regulated as follows. Inhibited by tunicamycin. The chain is Putative UDP-N-acetylglucosamine--dolichyl-phosphate N-acetylglucosaminephosphotransferase (gnpTA) from Sulfolobus acidocaldarius (strain ATCC 33909 / DSM 639 / JCM 8929 / NBRC 15157 / NCIMB 11770).